We begin with the raw amino-acid sequence, 434 residues long: Probable carboxypeptidase BDBG_01803 (434 aa).

The signal sequence occupies residues 1 to 20 (MKLSHLAAALSAQLVAPVAA). 3 N-linked (GlcNAc...) asparagine glycosylation sites follow: N35, N136, and N150. A Zn(2+)-binding site is contributed by D160. E192 functions as the Proton acceptor in the catalytic mechanism. E193 provides a ligand contact to Zn(2+). The N-linked (GlcNAc...) asparagine glycan is linked to N343.

Belongs to the peptidase M20A family. It depends on Zn(2+) as a cofactor.

It is found in the secreted. This chain is Probable carboxypeptidase BDBG_01803, found in Blastomyces gilchristii (strain SLH14081) (Blastomyces dermatitidis).